The chain runs to 259 residues: MLALISPAKTLDYETALPTDEFTQPRLLEHSAQLIDVCRKLSASEIASLMSVSEKIATLNADRFRDWKPEFDFSNARQAIYAFKGDVYTGLDAYHLKDKDIDFAQQHLRMLSGLYGLLRPLDLMMPYRLEMGTKLKNTRGHNLYEFWDDIITNQINEDLAAIKSELLVNLASDEYYKSVNEKKIKAEIVKPVFLDQKNGKYKVISFYAKKARGLMARFIIENQLNKAEDLKAFNTEGYYFDADNSSAKELVFKRDEQQA.

This sequence belongs to the UPF0246 family.

The chain is UPF0246 protein ABBFA_001173 from Acinetobacter baumannii (strain AB307-0294).